Consider the following 235-residue polypeptide: Probable ribosomal RNA small subunit methyltransferase A (235 aa).

His-9, Leu-11, Gly-34, Glu-55, Asp-78, and Asn-93 together coordinate S-adenosyl-L-methionine.

Belongs to the class I-like SAM-binding methyltransferase superfamily. rRNA adenine N(6)-methyltransferase family. RsmA subfamily.

The protein resides in the cytoplasm. Functionally, specifically dimethylates two adjacent adenosines in the loop of a conserved hairpin near the 3'-end of 16S rRNA in the 30S particle. May play a critical role in biogenesis of 30S subunits. In Pyrobaculum islandicum (strain DSM 4184 / JCM 9189 / GEO3), this protein is Probable ribosomal RNA small subunit methyltransferase A.